Here is a 207-residue protein sequence, read N- to C-terminus: Small ribosomal subunit protein uS4 (207 aa).

The interval 31–55 (KCKLDSKPGQHGRTSGARTSDYGTQ) is disordered. The span at 42-53 (GRTSGARTSDYG) shows a compositional bias: polar residues. Positions 97 to 160 (SRLDNVVYRM…KKQARIVEAL (64 aa)) constitute an S4 RNA-binding domain.

This sequence belongs to the universal ribosomal protein uS4 family. Part of the 30S ribosomal subunit. Contacts protein S5. The interaction surface between S4 and S5 is involved in control of translational fidelity.

In terms of biological role, one of the primary rRNA binding proteins, it binds directly to 16S rRNA where it nucleates assembly of the body of the 30S subunit. Functionally, with S5 and S12 plays an important role in translational accuracy. This is Small ribosomal subunit protein uS4 from Burkholderia ambifaria (strain ATCC BAA-244 / DSM 16087 / CCUG 44356 / LMG 19182 / AMMD) (Burkholderia cepacia (strain AMMD)).